Here is a 199-residue protein sequence, read N- to C-terminus: GTP cyclohydrolase-2 (199 aa).

Residue 49-53 coordinates GTP; that stretch reads RIHSE. Residues Cys-54, Cys-65, and Cys-67 each contribute to the Zn(2+) site. Residues Gln-70, 92–94, and Thr-114 each bind GTP; that span reads EGR. The active-site Proton acceptor is Asp-126. The Nucleophile role is filled by Arg-128. Residues Thr-149 and Lys-154 each coordinate GTP.

It belongs to the GTP cyclohydrolase II family. Homodimer. Zn(2+) is required as a cofactor.

The catalysed reaction is GTP + 4 H2O = 2,5-diamino-6-hydroxy-4-(5-phosphoribosylamino)-pyrimidine + formate + 2 phosphate + 3 H(+). It functions in the pathway cofactor biosynthesis; riboflavin biosynthesis; 5-amino-6-(D-ribitylamino)uracil from GTP: step 1/4. In terms of biological role, catalyzes the conversion of GTP to 2,5-diamino-6-ribosylamino-4(3H)-pyrimidinone 5'-phosphate (DARP), formate and pyrophosphate. The chain is GTP cyclohydrolase-2 from Blochmanniella pennsylvanica (strain BPEN).